Consider the following 412-residue polypeptide: Peptide chain release factor subunit 1 (412 aa).

The protein belongs to the eukaryotic release factor 1 family. As to quaternary structure, heterodimer of two subunits, one of which binds GTP.

The protein localises to the cytoplasm. Functionally, directs the termination of nascent peptide synthesis (translation) in response to the termination codons UAA, UAG and UGA. This is Peptide chain release factor subunit 1 from Methanobrevibacter smithii (strain ATCC 35061 / DSM 861 / OCM 144 / PS).